The sequence spans 1512 residues: DNA polymerase (1512 aa).

Belongs to the DNA polymerase type-B family.

It is found in the host nucleus. It carries out the reaction DNA(n) + a 2'-deoxyribonucleoside 5'-triphosphate = DNA(n+1) + diphosphate. The polypeptide is DNA polymerase (57/58) (Ictalurid herpesvirus 1 (strain Auburn) (IcHV-1)).